A 154-amino-acid chain; its full sequence is Aspartate carbamoyltransferase regulatory chain (154 aa).

Positions 110, 115, 136, and 139 each coordinate Zn(2+).

This sequence belongs to the PyrI family. In terms of assembly, contains catalytic and regulatory chains. The cofactor is Zn(2+).

In terms of biological role, involved in allosteric regulation of aspartate carbamoyltransferase. This chain is Aspartate carbamoyltransferase regulatory chain, found in Halobacterium salinarum (strain ATCC 700922 / JCM 11081 / NRC-1) (Halobacterium halobium).